Consider the following 311-residue polypeptide: Putative S-adenosyl-L-methionine-dependent methyltransferase MRA_0152 (311 aa).

S-adenosyl-L-methionine is bound by residues Asp135 and 164–165 (DL).

It belongs to the UPF0677 family.

Its function is as follows. Exhibits S-adenosyl-L-methionine-dependent methyltransferase activity. The protein is Putative S-adenosyl-L-methionine-dependent methyltransferase MRA_0152 of Mycobacterium tuberculosis (strain ATCC 25177 / H37Ra).